Here is a 584-residue protein sequence, read N- to C-terminus: Pentatricopeptide repeat-containing protein At2g01510, mitochondrial (584 aa).

Residues Met1–Ser20 constitute a mitochondrion transit peptide. PPR repeat units lie at residues Arg73–Pro107, Asp108–Cys142, Leu143–Lys173, Asp174–Phe208, Asp209–Cys243, Asn244–Arg274, Asn275–Pro309, Asn310–Asn344, and Arg348–Glu378. Residues Ile383 to Glu458 are type E motif. The interval Gly459 to Arg489 is type E(+) motif. Residues Lys490–Trp584 form a type DYW motif region.

It belongs to the PPR family. PCMP-H subfamily.

The protein resides in the mitochondrion. The protein is Pentatricopeptide repeat-containing protein At2g01510, mitochondrial (PCMP-H37) of Arabidopsis thaliana (Mouse-ear cress).